The sequence spans 215 residues: Cytidylate kinase (215 aa).

10–18 (GPAASGKGT) is an ATP binding site.

Belongs to the cytidylate kinase family. Type 1 subfamily.

The protein localises to the cytoplasm. The catalysed reaction is CMP + ATP = CDP + ADP. It catalyses the reaction dCMP + ATP = dCDP + ADP. The chain is Cytidylate kinase from Bartonella bacilliformis (strain ATCC 35685 / KC583 / Herrer 020/F12,63).